A 93-amino-acid chain; its full sequence is MANATSFIALAYLLASALMTTVVLGNRQCVQAMDCTNVCSHGGLCTKNGKCVCWSPNVVINSGPPCWSDEMCFSTCGGNGGYCNYDIGGCFCQ.

An N-terminal signal peptide occupies residues 1–25 (MANATSFIALAYLLASALMTTVVLG). Intrachain disulfides connect Cys51–Cys83, Cys66–Cys90, and Cys72–Cys92.

The protein belongs to the DEFL family.

It is found in the secreted. The sequence is that of Putative defensin-like protein 282 from Arabidopsis thaliana (Mouse-ear cress).